A 388-amino-acid polypeptide reads, in one-letter code: Adenosine deaminase-like protein (388 aa).

Over residues 1–13 the composition is skewed to basic residues; it reads MPNNSKHKKKQQR. A disordered region spans residues 1 to 34; the sequence is MPNNSKHKKKQQRRQQEAQKKSRAKQIETDKKND. Basic and acidic residues predominate over residues 14-34; that stretch reads RQQEAQKKSRAKQIETDKKND. Zn(2+)-binding residues include His-65 and His-67. Residues His-67, His-114, 146-149, Asp-186, and Gly-218 contribute to the N(6)-methyl-AMP site; that span reads TSPK. Residue His-245 participates in Zn(2+) binding. Residues Glu-248, Asp-326, and Asp-327 each coordinate N(6)-methyl-AMP. Residue Glu-248 is the Proton donor of the active site. Asp-326 provides a ligand contact to Zn(2+).

Belongs to the metallo-dependent hydrolases superfamily. Adenosine and AMP deaminases family. In terms of assembly, monomer. It depends on Zn(2+) as a cofactor.

It carries out the reaction N(6)-methyl-AMP + H2O + H(+) = IMP + methylamine. Catalyzes the hydrolysis of the free cytosolic methylated adenosine nucleotide N(6)-methyl-AMP (N6-mAMP) to produce inositol monophosphate (IMP) and methylamine. Is required for the catabolism of cytosolic N6-mAMP, which is derived from the degradation of mRNA containing N6-methylated adenine (m6A). This is Adenosine deaminase-like protein from Caenorhabditis elegans.